Reading from the N-terminus, the 175-residue chain is Alpha-crystallin B chain (175 aa).

M1 is modified (N-acetylmethionine). S19 bears the Phosphoserine mark. S41 carries O-linked (GlcNAc) serine glycosylation. Phosphoserine is present on residues S45 and S59. The 109-residue stretch at 56–164 (RAPSWIDTGL…PERTIPITRE (109 aa)) folds into the sHSP domain. Zn(2+) is bound at residue H83. K92 is modified (N6-acetyllysine). The Zn(2+) site is built by H104, E106, H111, and H119. Positions 142–175 (VLTVNGPRKQAPGPERTIPITREEKPAVTAAPKK) are disordered. At K166 the chain carries N6-acetyllysine. O-linked (GlcNAc) threonine glycosylation occurs at T170.

It belongs to the small heat shock protein (HSP20) family. As to quaternary structure, heteromer composed of three CRYAA and one CRYAB subunits. Aggregates with homologous proteins, including the small heat shock protein HSPB1, to form large heteromeric complexes. Inter-subunit bridging via zinc ions enhances stability, which is crucial as there is no protein turn over in the lens. Interacts with HSPBAP1 and TTN/titin. Interacts with TMEM109; in the cellular response to DNA damage. Interacts with DES; binds rapidly during early stages of DES filament assembly and a reduced binding seen in the later stages. Interacts with TMED10; the interaction mediates the translocation from the cytoplasm into the ERGIC (endoplasmic reticulum-Golgi intermediate compartment) and thereby secretion. Interacts with ATP6V1A and with MTOR, forming a ternary complex. Lens as well as other tissues.

Its subcellular location is the cytoplasm. The protein localises to the nucleus. It is found in the secreted. The protein resides in the lysosome. May contribute to the transparency and refractive index of the lens. Has chaperone-like activity, preventing aggregation of various proteins under a wide range of stress conditions. In lens epithelial cells, stabilizes the ATP6V1A protein, preventing its degradation by the proteasome. This Oryctolagus cuniculus (Rabbit) protein is Alpha-crystallin B chain (CRYAB).